The primary structure comprises 88 residues: Small ribosomal subunit protein bS20 (88 aa).

Belongs to the bacterial ribosomal protein bS20 family.

Functionally, binds directly to 16S ribosomal RNA. This Mycoplasmopsis synoviae (strain 53) (Mycoplasma synoviae) protein is Small ribosomal subunit protein bS20.